The primary structure comprises 395 residues: Probable beta-1,3-galactosyltransferase 8 (395 aa).

The chain crosses the membrane as a helical; Signal-anchor for type II membrane protein span at residues 5–27 (AASGKAIIVLCLASFLAGSLFMS). N-linked (GlcNAc...) asparagine glycosylation is present at Asn-117.

The protein belongs to the glycosyltransferase 31 family. Requires Mn(2+) as cofactor.

The protein resides in the golgi apparatus membrane. The protein operates within protein modification; protein glycosylation. Beta-1,3-galactosyltransferase that transfers galactose from UDP-galactose to substrates with a terminal glycosyl residue. The polypeptide is Probable beta-1,3-galactosyltransferase 8 (B3GALT8) (Arabidopsis thaliana (Mouse-ear cress)).